We begin with the raw amino-acid sequence, 379 residues long: Succinate--CoA ligase [ADP-forming] subunit beta (379 aa).

The 229-residue stretch at 9–237 folds into the ATP-grasp domain; it reads RDILARYGIP…SSDEPEAEQR (229 aa). ATP is bound by residues K45, 52-54, I94, and E99; that span reads GRG. Positions 192 and 206 each coordinate Mg(2+). Substrate contacts are provided by residues N257 and 314–316; that span reads GIT.

Belongs to the succinate/malate CoA ligase beta subunit family. Heterotetramer of two alpha and two beta subunits. Mg(2+) is required as a cofactor.

The catalysed reaction is succinate + ATP + CoA = succinyl-CoA + ADP + phosphate. It catalyses the reaction GTP + succinate + CoA = succinyl-CoA + GDP + phosphate. Its pathway is carbohydrate metabolism; tricarboxylic acid cycle; succinate from succinyl-CoA (ligase route): step 1/1. In terms of biological role, succinyl-CoA synthetase functions in the citric acid cycle (TCA), coupling the hydrolysis of succinyl-CoA to the synthesis of either ATP or GTP and thus represents the only step of substrate-level phosphorylation in the TCA. The beta subunit provides nucleotide specificity of the enzyme and binds the substrate succinate, while the binding sites for coenzyme A and phosphate are found in the alpha subunit. The sequence is that of Succinate--CoA ligase [ADP-forming] subunit beta from Roseiflexus sp. (strain RS-1).